The following is a 299-amino-acid chain: Bifunctional protein FolD 2 (299 aa).

Residues 168–170 (GRS), serine 193, and isoleucine 234 each bind NADP(+).

This sequence belongs to the tetrahydrofolate dehydrogenase/cyclohydrolase family. In terms of assembly, homodimer.

The enzyme catalyses (6R)-5,10-methylene-5,6,7,8-tetrahydrofolate + NADP(+) = (6R)-5,10-methenyltetrahydrofolate + NADPH. The catalysed reaction is (6R)-5,10-methenyltetrahydrofolate + H2O = (6R)-10-formyltetrahydrofolate + H(+). Its pathway is one-carbon metabolism; tetrahydrofolate interconversion. In terms of biological role, catalyzes the oxidation of 5,10-methylenetetrahydrofolate to 5,10-methenyltetrahydrofolate and then the hydrolysis of 5,10-methenyltetrahydrofolate to 10-formyltetrahydrofolate. The protein is Bifunctional protein FolD 2 of Rhizobium etli (strain ATCC 51251 / DSM 11541 / JCM 21823 / NBRC 15573 / CFN 42).